Reading from the N-terminus, the 862-residue chain is ATP-dependent helicase Lhr-Core (862 aa).

Positions 37, 60, 61, 178, 179, 360, 377, and 380 each coordinate ATP. A Helicase ATP-binding domain is found at 41–233 (IMDIHRGRNV…FLVGYSYGSE (193 aa)). A DEAH box motif is present at residues 178–181 (DEIH). Residues 269–424 (ALYDILHDLI…SIKVPENCLD (156 aa)) form the Helicase C-terminal domain. The segment at 425 to 513 (VLAQHIYGMA…LYSTNIGTIP (89 aa)) is WH domain. Residues 514 to 862 (DRSAAVVKCG…HQAIIDEIKR (349 aa)) are domain 4.

The protein belongs to the Lhr helicase family. Lhr-Core subfamily. In terms of assembly, monomer.

It carries out the reaction Couples ATP hydrolysis with the unwinding of duplex DNA by translocating in the 3'-5' direction.. The enzyme catalyses ATP + H2O = ADP + phosphate + H(+). Its function is as follows. DNA helicase that translocates in a 3'-5' direction on single-stranded (ss)DNA, probably involved in DNA repair. Most active on three- or four-stranded forked DNA; flayed structures and Holliday junction (HJ) substrates are unwound slightly less well. Also unwinds 3'-tailed duplexes; both RNA:DNA hybrids and double-stranded (ds)DNA with a 3'-single strand (ss)DNA loading strand are unwound. Substrates where the helicase loads on a 3'-ssRNA tail (DNA:RNA and RNA:RNA) were not tested. Blunt-ended dsDNA is not a substrate. Probably involved in replication-coupled DNA repair; remodeling of fork DNA after binding by Lhr generates ssDNA for ATP-dependent DNA translocation. The chain is ATP-dependent helicase Lhr-Core from Methanothermobacter thermautotrophicus (strain ATCC 29096 / DSM 1053 / JCM 10044 / NBRC 100330 / Delta H) (Methanobacterium thermoautotrophicum).